Here is a 113-residue protein sequence, read N- to C-terminus: Large ribosomal subunit protein eL34 (113 aa).

The protein belongs to the eukaryotic ribosomal protein eL34 family.

This is Large ribosomal subunit protein eL34 from Methanopyrus kandleri (strain AV19 / DSM 6324 / JCM 9639 / NBRC 100938).